A 393-amino-acid polypeptide reads, in one-letter code: CAI-1 autoinducer synthase (393 aa).

Residue lysine 240 is modified to N6-(pyridoxal phosphate)lysine.

Belongs to the class-II pyridoxal-phosphate-dependent aminotransferase family. Requires pyridoxal 5'-phosphate as cofactor.

Required for the synthesis of the quorum-sensing autoinducer CAI-1 ((S)-3-hydroxytridecan-4-one) which probably functions as an intragenus signal. The chain is CAI-1 autoinducer synthase (cqsA) from Vibrio campbellii (strain ATCC BAA-1116).